The chain runs to 380 residues: Kappa-type opioid receptor (380 aa).

Topologically, residues 1–57 (MESPIQIFRGEPGPTCAPSACLLPNSSSWFPNWAESDSNGSVGSEDQQLEPAHISPA) are extracellular. Asn25 and Asn39 each carry an N-linked (GlcNAc...) asparagine glycan. The helical transmembrane segment at 58-85 (IPVIITAVYSVVFVVGLVGNSLVMFVII) threads the bilayer. The Cytoplasmic segment spans residues 86-95 (RYTKMKTATN). A helical transmembrane segment spans residues 96-119 (IYIFNLALADALVTTTMPFQSAVY). Over 120–132 (LMNSWPFGDVLCK) the chain is Extracellular. Cysteines 131 and 210 form a disulfide. A helical membrane pass occupies residues 133 to 154 (IVISIDYYNMFTSIFTLTMMSV). At 155–173 (DRYIAVCHPVKALDFRTPL) the chain is on the cytoplasmic side. A helical membrane pass occupies residues 174-196 (KAKIINICIWLLASSVGISAIVL). Over 197–222 (GGTKVREDVDVIECSLQFPDDEYSWW) the chain is Extracellular. The chain crosses the membrane as a helical span at residues 223–247 (DLFMKICVFVFAFVIPVLIIIVCYT). Residues 248–274 (LMILRLKSVRLLSGSREKDRNLRRITK) lie on the Cytoplasmic side of the membrane. A helical transmembrane segment spans residues 275-296 (LVLVVVAVFIICWTPIHIFILV). Residues 297 to 311 (EALGSTSHSTAVLSS) lie on the Extracellular side of the membrane. A helical membrane pass occupies residues 312–333 (YYFCIALGYTNSSLNPVLYAFL). Topologically, residues 334-380 (DENFKRCFRDFCFPIKMRMERQSTNRVRNTVQDPASMRDVGGMNKPV) are cytoplasmic. Cys345 is lipidated: S-palmitoyl cysteine.

The protein belongs to the G-protein coupled receptor 1 family. As to quaternary structure, interacts with NHERF1. Interacts with GABARAPL1.

The protein resides in the cell membrane. Its function is as follows. G-protein coupled opioid receptor that functions as a receptor for endogenous alpha-neoendorphins and dynorphins, but has low affinity for beta-endorphins. Also functions as a receptor for various synthetic opioids and for the psychoactive diterpene salvinorin A. Ligand binding causes a conformation change that triggers signaling via guanine nucleotide-binding proteins (G proteins) and modulates the activity of down-stream effectors, such as adenylate cyclase. Signaling leads to the inhibition of adenylate cyclase activity. Inhibits neurotransmitter release by reducing calcium ion currents and increasing potassium ion conductance. Plays a role in the perception of pain. Plays a role in mediating reduced physical activity upon treatment with synthetic opioids. Plays a role in the regulation of salivation in response to synthetic opioids. May play a role in arousal and regulation of autonomic and neuroendocrine functions. The sequence is that of Kappa-type opioid receptor (Oprk1) from Rattus norvegicus (Rat).